A 378-amino-acid polypeptide reads, in one-letter code: Protein FAM170B (378 aa).

Disordered regions lie at residues 1–56, 244–265, and 277–378; these read MKHH…LPDD, TRDQ…DSSE, and QQQP…QQGK. Low complexity-rich tracts occupy residues 277-339 and 349-378; these read QQQP…QPLQ and PQKQ…QQGK.

The protein belongs to the FAM170 family. As to quaternary structure, interacts with GOPC. Exclusively expressed in adult testis (at protein level). Expression first started at postnatal week 3 in round spermatids, elongated spermatids and mature sperm.

It localises to the cytoplasmic vesicle. It is found in the secretory vesicle. The protein resides in the acrosome. Its subcellular location is the acrosome outer membrane. In terms of biological role, plays a role in fertilization through the acrosome reaction. The sequence is that of Protein FAM170B from Mus musculus (Mouse).